The chain runs to 332 residues: Protein pelota homolog (332 aa).

Belongs to the eukaryotic release factor 1 family. Pelota subfamily. Monomer. The cofactor is a divalent metal cation.

It localises to the cytoplasm. In terms of biological role, may function in recognizing stalled ribosomes, interact with stem-loop structures in stalled mRNA molecules, and effect endonucleolytic cleavage of the mRNA. May play a role in the release non-functional ribosomes and degradation of damaged mRNAs. Has endoribonuclease activity. The protein is Protein pelota homolog of Pyrobaculum calidifontis (strain DSM 21063 / JCM 11548 / VA1).